A 634-amino-acid polypeptide reads, in one-letter code: Ankyrin repeat protein OPG025 (634 aa).

ANK repeat units follow at residues 36-69 (DGETPLKAYVTKKNNNIKNDVVILLLSSVDYKNI), 70-100 (NDFDIFEYLCSDNIDIDLLKLLISKGIEINS), 103-134 (NGINIVEKYATTSNPNVDVFKLLLDKGIPTCS), 175-211 (MGKTVLYYYIITRSQDGYATSLDVINYLISHKKEMRY), 307-337 (IQDLLLEYVSYHTVYINVIKCMIDEGATLYR), and 412-441 (HGCSILYHCIKSHSVSLVEWLIDNGADINI).

It belongs to the orthopoxvirus OPG025 family. In terms of assembly, interacts with components of host SCF complex CUL1 and SKP1 and components of the cullin deneddylation/COP9 signalosome complex subunits COPS7A and COPS7B.

Plays a role in the inhibition of host immune repsonse by counteracting the action of interferons on early events in the viral replication cycle. In Vaccinia virus (strain Western Reserve) (VACV), this protein is Ankyrin repeat protein OPG025 (OPG035).